Here is a 911-residue protein sequence, read N- to C-terminus: Protein translocase subunit SecA (911 aa).

Residues Q90, 108–112, and D515 contribute to the ATP site; that span reads GEGKT. 4 residues coordinate Zn(2+): C891, C893, C902, and H903.

The protein belongs to the SecA family. In terms of assembly, monomer and homodimer. Part of the essential Sec protein translocation apparatus which comprises SecA, SecYEG and auxiliary proteins SecDF-YajC and YidC. Zn(2+) serves as cofactor.

The protein localises to the cell inner membrane. It localises to the cytoplasm. The enzyme catalyses ATP + H2O + cellular proteinSide 1 = ADP + phosphate + cellular proteinSide 2.. In terms of biological role, part of the Sec protein translocase complex. Interacts with the SecYEG preprotein conducting channel. Has a central role in coupling the hydrolysis of ATP to the transfer of proteins into and across the cell membrane, serving both as a receptor for the preprotein-SecB complex and as an ATP-driven molecular motor driving the stepwise translocation of polypeptide chains across the membrane. The protein is Protein translocase subunit SecA of Blochmanniella pennsylvanica (strain BPEN).